Reading from the N-terminus, the 143-residue chain is Ribosome maturation factor RimP (143 aa).

It belongs to the RimP family.

The protein resides in the cytoplasm. In terms of biological role, required for maturation of 30S ribosomal subunits. This is Ribosome maturation factor RimP from Neisseria meningitidis serogroup C / serotype 2a (strain ATCC 700532 / DSM 15464 / FAM18).